The primary structure comprises 442 residues: UDP-N-acetylmuramate--L-alanine ligase (442 aa).

Residue 110–116 (GAHGKTS) participates in ATP binding.

It belongs to the MurCDEF family.

It localises to the cytoplasm. It catalyses the reaction UDP-N-acetyl-alpha-D-muramate + L-alanine + ATP = UDP-N-acetyl-alpha-D-muramoyl-L-alanine + ADP + phosphate + H(+). Its pathway is cell wall biogenesis; peptidoglycan biosynthesis. Cell wall formation. This Streptococcus thermophilus (strain ATCC BAA-491 / LMD-9) protein is UDP-N-acetylmuramate--L-alanine ligase.